The chain runs to 213 residues: Ribonuclease Oy (213 aa).

His35 is a catalytic residue. Cys51 and Cys96 are disulfide-bonded. Asn52 is a glycosylation site (N-linked (GlcNAc...) asparagine). Residues Glu89 and His93 contribute to the active site. Residues Asn121 and Asn142 are each glycosylated (N-linked (GlcNAc...) asparagine). Disulfide bonds link Cys160/Cys198 and Cys178/Cys188.

It belongs to the RNase T2 family.

The protein resides in the secreted. Functionally, releases mononucleotides from RNA in the order of 3'-GMP, 3'-AMP and 3'-UMP. In Magallana gigas (Pacific oyster), this protein is Ribonuclease Oy.